A 650-amino-acid polypeptide reads, in one-letter code: MSSQSLYKVSGNIAANALVNNDQYKKMYQESIVNPEGFWREHGKRIDWIKPYTKIKKTSFDDHNLSINWFYDGTLNASANCLDRHLAEHSDRVAIIWEGDNASEQRKITYGELHTQVCKFANALRSQGVRRGDIVTIYMPMVPEAAVAMLACARIGAVHSVVFGGFSPDSIASRVIDGKSKVVITADEGMRGGRAIPLKRNIDDALKHPDVTSVEKVIVLKRTGGKVDWVEGRDVWWHSLVETASEHCAIEEMGAEDPLFLLYTSGSTGNPKGVLHTTGGYMVYASMTHEYVFDYKPGEIYWCTADVGWITGHSYMVYGPLANGATVLIHEGIPNHPSPARLGEMIDRHKVNILYTAPTLIRALMAEGKQHFDKYDGSSLRIMGSVGEPINPEAWRWYHEVIGHEHCPIVDTWWQTETGGILITPLPGATDTKPGSATRPFFGVQPALVDNMGNILEGATEGNLVLLDSWPGQMRTVYGDHERFVLTYFKTFRGMYFTGDGARRDEDGYYWITGRVDDVINVSGHRLGTAEVESALVSHELVAEAAVVGYPHDIKGQGIYAYVTLTRGTEESEELRQELRQWVRKEIGALATPDLIQWATGLPKTRSGKIMRRFLRKIAANEVTNLGDASTLADPAVIETLIETRLNRNE.

Residues 191–194 (RGGR), threonine 311, and asparagine 335 each bind CoA. ATP contacts are provided by residues 387-389 (GEP), 411-416 (DTWWQT), aspartate 500, and arginine 515. Serine 523 lines the CoA pocket. Arginine 526 lines the ATP pocket. Mg(2+)-binding residues include valine 537, histidine 539, and valine 542. CoA is bound at residue arginine 584. At lysine 609 the chain carries N6-acetyllysine.

The protein belongs to the ATP-dependent AMP-binding enzyme family. It depends on Mg(2+) as a cofactor. Acetylated. Deacetylation by the SIR2-homolog deacetylase activates the enzyme.

The enzyme catalyses acetate + ATP + CoA = acetyl-CoA + AMP + diphosphate. Functionally, catalyzes the conversion of acetate into acetyl-CoA (AcCoA), an essential intermediate at the junction of anabolic and catabolic pathways. AcsA undergoes a two-step reaction. In the first half reaction, AcsA combines acetate with ATP to form acetyl-adenylate (AcAMP) intermediate. In the second half reaction, it can then transfer the acetyl group from AcAMP to the sulfhydryl group of CoA, forming the product AcCoA. The sequence is that of Acetyl-coenzyme A synthetase from Shewanella sp. (strain MR-7).